The chain runs to 277 residues: Reaction center protein L chain (277 aa).

A run of 3 helical transmembrane segments spans residues Phe-30–Trp-52, Gly-84–Val-106, and Gly-113–Ile-135. Residues His-154 and His-174 each coordinate (7R,8Z)-bacteriochlorophyll b. Residues Ala-173 to Val-195 traverse the membrane as a helical segment. His-191 provides a ligand contact to Fe cation. Residue Phe-217 participates in a ubiquinone binding. His-231 serves as a coordination point for Fe cation. The chain crosses the membrane as a helical span at residues Leu-233–Val-255.

This sequence belongs to the reaction center PufL/M/PsbA/D family. Reaction center is composed of four bacteriochlorophylls, two bacteriopheophytins, two ubiquinones, one iron, and three highly hydrophobic polypeptide chains (designated L, M, and H).

It is found in the cellular chromatophore membrane. Its function is as follows. The reaction center is a membrane-bound complex that mediates the initial photochemical event in the electron transfer process of photosynthesis. The sequence is that of Reaction center protein L chain (pufL) from Rhodopseudomonas palustris (strain ATCC BAA-98 / CGA009).